The sequence spans 279 residues: Oxygen-dependent coproporphyrinogen-III oxidase (279 aa).

S102 provides a ligand contact to substrate. A divalent metal cation-binding residues include H106 and H116. The Proton donor role is filled by H116. Position 118-120 (118-120 (NTR)) interacts with substrate. A divalent metal cation contacts are provided by H149 and H179. The important for dimerization stretch occupies residues 244–279 (YVEFNLLYDRGTKFGLMTDGNVEAILMSLPPEVKFN).

This sequence belongs to the aerobic coproporphyrinogen-III oxidase family. Homodimer. A divalent metal cation serves as cofactor.

The protein resides in the cytoplasm. The catalysed reaction is coproporphyrinogen III + O2 + 2 H(+) = protoporphyrinogen IX + 2 CO2 + 2 H2O. It functions in the pathway porphyrin-containing compound metabolism; protoporphyrin-IX biosynthesis; protoporphyrinogen-IX from coproporphyrinogen-III (O2 route): step 1/1. Involved in the heme biosynthesis. Catalyzes the aerobic oxidative decarboxylation of propionate groups of rings A and B of coproporphyrinogen-III to yield the vinyl groups in protoporphyrinogen-IX. This Rickettsia africae (strain ESF-5) protein is Oxygen-dependent coproporphyrinogen-III oxidase.